We begin with the raw amino-acid sequence, 592 residues long: MSKPEFSTLIDLLQYRSHYQSARKAYSFLQNGEKEVNSLSYKELDEKARAIAVELQKQVDRNERALLLYPQGLEFIAALFGCLYAGVVAIPAPPPDPIRLKRTLPRLEAILFDAQASVILTDFSKYSQLKESTSELSSEFKRIKWIVSDKIPTALSQKWQKPDINSDTLAYLQYTSGSTSTPKGVMLTHKNLIHHCSYIKEAWGYTSDSIATTWVPHFHDYGLVDGLIQPLYSGIPCYVMSPIAFYMRPIRWLQTISRYRVTHSQGPNFAYEHCLRRTTAEQRANLDLSSWRTASNGAEPVRQETVENFIATFEPFGFRRDALYPAYGLAEATLLVSTKKHGEKARVLTLAAEALEKNRIVVVSPAEKEQVVRFVVSCGPPIGGMKVAIVNPFTLRKCQPDQVGEIWVCDPSMAVGYWNRLEETKKTFHANLAESGEGPFMRTGDLGFLKDGELFITGRIKDVIIIRGRNHYPQDIELTVEKSHPSLRSSHGAALAVEIKGEERLIVVQEVERSYQKTLDINEVVGNIREAVTDEHDLQVYSVVLIKAGSIPKTSSGKIQRSACRVKFLEGTLDQWEARVKVTSKSGAAVSS.

The protein belongs to the ATP-dependent AMP-binding enzyme family.

It carries out the reaction a medium-chain fatty acid + holo-[ACP] + ATP = a medium-chain fatty acyl-[ACP] + AMP + diphosphate. The enzyme catalyses a medium-chain fatty acid + ATP + H(+) = a medium-chain fatty acyl-AMP + diphosphate. It catalyses the reaction a medium-chain fatty acyl-AMP + holo-[ACP] = a medium-chain fatty acyl-[ACP] + AMP + H(+). Its function is as follows. Ligase involved in the biosynthesis of jamaicamides, which show sodium channel blocking activity and fish toxicity. Initiates jamaicamide biosynthesis by the activation of the starter unit, 5-hexenoic acid, followed by the loading of the activated 5-hexenoic acid onto the acyl carrier protein JamC. In vitro, can also use 5-hexynoic acid, heptanoic acid, butanoic acid, hexanoic acid and benzoic acid. The protein is Medium-chain-fatty-acid--[acyl-carrier-protein] ligase JamA of Moorena producens (strain JHB).